We begin with the raw amino-acid sequence, 462 residues long: Argininosuccinate lyase (462 aa).

Belongs to the lyase 1 family. Argininosuccinate lyase subfamily.

The protein resides in the cytoplasm. The enzyme catalyses 2-(N(omega)-L-arginino)succinate = fumarate + L-arginine. It participates in amino-acid biosynthesis; L-arginine biosynthesis; L-arginine from L-ornithine and carbamoyl phosphate: step 3/3. The chain is Argininosuccinate lyase from Pelagibacter ubique (strain HTCC1062).